A 417-amino-acid polypeptide reads, in one-letter code: Probable uracil permease (417 aa).

Over 1 to 13 (MTNQNPPVLLEQN) the chain is Cytoplasmic. A helical membrane pass occupies residues 14–37 (HAKQAFVGLQMLFVAFGALVLVPL). Residues 38 to 41 (ITGL) are Periplasmic-facing. A helical membrane pass occupies residues 42–61 (NANTALLTAGIGTLLFQLCT). The Cytoplasmic portion of the chain corresponds to 62 to 64 (GRQ). The discontinuously helical transmembrane segment at 65–81 (VPIFLASSFAFIAPIQY) threads the bilayer. Residue F73 participates in uracil binding. At 83-90 (VTTWGIAT) the chain is on the periplasmic side. Residues 91–111 (TMGGLVFTGLVYFALSTLVKI) form a helical membrane-spanning segment. Residues 112 to 123 (KGAGALQKVFPP) lie on the Cytoplasmic side of the membrane. Residues 124–145 (VVVGPVIIIIGMGLAPVAVDMA) traverse the membrane as a helical segment. Residues 146 to 154 (LGKNSTYQY) are Periplasmic-facing. The helical transmembrane segment at 155-170 (NDAVFVSMATLLTTLG) threads the bilayer. Residues 171–177 (VAVFAKG) lie on the Cytoplasmic side of the membrane. A helical membrane pass occupies residues 178-198 (MMKLIPIMFGIVVGYILCLFL). The Periplasmic portion of the chain corresponds to 199–223 (GLINFQPVIDAPWFSVPEITTPEFK). Residues 224–247 (LEAILYLLPIAIAPAVEHVGGIMA) traverse the membrane as a helical segment. Residue E240 coordinates uracil. Residues 248-260 (ISSVTGKDFLQKP) are Cytoplasmic-facing. Residues 261–280 (GLHRTLLGDGIATSAASFLG) traverse the membrane as a helical segment. The chain crosses the membrane as a discontinuously helical span at residues 281-297 (GPPNTTYAEVTGAVMLT). Residue E289 coordinates uracil. Over 298–300 (RNF) the chain is Cytoplasmic. Residues 301-318 (NPKIMTWAAVWAIAISFC) traverse the membrane as a helical segment. Topologically, residues 319–331 (GKVGAFLSTIPTI) are periplasmic. Residues 332 to 353 (VMGGIMMLVFGSIAVVGMSTLI) traverse the membrane as a helical segment. Topologically, residues 354 to 364 (RGKVDVTEARN) are cytoplasmic. Residues 365–400 (LCIISVVMTFGIGGMFVNFGEVSLKGISLCAVVAIL) constitute an intramembrane region (discontinuously helical). Topologically, residues 401–416 (LNLILPKAKNTPIEEN) are cytoplasmic.

The protein belongs to the nucleobase:cation symporter-2 (NCS2) (TC 2.A.40) family.

It is found in the cell inner membrane. The catalysed reaction is uracil(in) + H(+)(in) = uracil(out) + H(+)(out). Its function is as follows. Transport of uracil in the cell. The protein is Probable uracil permease (uraA) of Pasteurella multocida (strain Pm70).